The primary structure comprises 200 residues: Large ribosomal subunit protein bL25 (200 aa).

This sequence belongs to the bacterial ribosomal protein bL25 family. CTC subfamily. In terms of assembly, part of the 50S ribosomal subunit; part of the 5S rRNA/L5/L18/L25 subcomplex. Contacts the 5S rRNA. Binds to the 5S rRNA independently of L5 and L18.

Its function is as follows. This is one of the proteins that binds to the 5S RNA in the ribosome where it forms part of the central protuberance. The polypeptide is Large ribosomal subunit protein bL25 (Pseudomonas fluorescens (strain Pf0-1)).